We begin with the raw amino-acid sequence, 799 residues long: Lon protease 4 (799 aa).

Residues 15–204 form the Lon N-terminal domain; sequence FPLLPLRTGV…RVAGLLAEAS (190 aa). Residue 356–363 participates in ATP binding; the sequence is GPPGVGKT. Positions 595–776 constitute a Lon proteolytic domain; the sequence is TSVAGVATGL…SQVIAAALEE (182 aa). Catalysis depends on residues Ser682 and Lys725.

This sequence belongs to the peptidase S16 family. In terms of assembly, homohexamer. Organized in a ring with a central cavity.

Its subcellular location is the cytoplasm. It catalyses the reaction Hydrolysis of proteins in presence of ATP.. Functionally, ATP-dependent serine protease that mediates the selective degradation of mutant and abnormal proteins as well as certain short-lived regulatory proteins. Required for cellular homeostasis and for survival from DNA damage and developmental changes induced by stress. Degrades polypeptides processively to yield small peptide fragments that are 5 to 10 amino acids long. Binds to DNA in a double-stranded, site-specific manner. The chain is Lon protease 4 from Sorangium cellulosum (strain So ce56) (Polyangium cellulosum (strain So ce56)).